The sequence spans 217 residues: Probable cutinase 3 (217 aa).

The signal sequence occupies residues 1–17; it reads MSLRSLFVAGLATLALA. 2 disulfide bridges follow: cysteine 39/cysteine 118 and cysteine 65/cysteine 79. Catalysis depends on serine 129, which acts as the Nucleophile. Cysteine 180 and cysteine 187 are disulfide-bonded. Aspartate 184 is an active-site residue. Histidine 197 functions as the Proton donor/acceptor in the catalytic mechanism.

The protein belongs to the cutinase family.

The protein resides in the secreted. The catalysed reaction is cutin + H2O = cutin monomers.. In terms of biological role, catalyzes the hydrolysis of complex carboxylic polyesters found in the cell wall of plants. Degrades cutin, a macromolecule that forms the structure of the plant cuticle. The sequence is that of Probable cutinase 3 from Aspergillus fumigatus (strain CBS 144.89 / FGSC A1163 / CEA10) (Neosartorya fumigata).